Consider the following 256-residue polypeptide: Trans-aconitate 2-methyltransferase (256 aa).

The protein belongs to the methyltransferase superfamily. Tam family.

The protein resides in the cytoplasm. It carries out the reaction trans-aconitate + S-adenosyl-L-methionine = (E)-3-(methoxycarbonyl)pent-2-enedioate + S-adenosyl-L-homocysteine. In terms of biological role, catalyzes the S-adenosylmethionine monomethyl esterification of trans-aconitate. The sequence is that of Trans-aconitate 2-methyltransferase from Rhizobium leguminosarum bv. trifolii (strain WSM2304).